Reading from the N-terminus, the 255-residue chain is Hydroxyacylglutathione hydrolase (255 aa).

Residues His55, His57, Asp59, His60, His111, Asp131, and His169 each contribute to the Zn(2+) site.

The protein belongs to the metallo-beta-lactamase superfamily. Glyoxalase II family. In terms of assembly, monomer. The cofactor is Zn(2+).

It catalyses the reaction an S-(2-hydroxyacyl)glutathione + H2O = a 2-hydroxy carboxylate + glutathione + H(+). The protein operates within secondary metabolite metabolism; methylglyoxal degradation; (R)-lactate from methylglyoxal: step 2/2. Its function is as follows. Thiolesterase that catalyzes the hydrolysis of S-D-lactoyl-glutathione to form glutathione and D-lactic acid. This chain is Hydroxyacylglutathione hydrolase, found in Chromohalobacter salexigens (strain ATCC BAA-138 / DSM 3043 / CIP 106854 / NCIMB 13768 / 1H11).